The chain runs to 73 residues: Conotoxin Im14.3 (73 aa).

A signal peptide spans 1-17 (MGVFRCCLAAALVVVCL). Residues 18–35 (SRMGGTEPLESNHEDERR) constitute a propeptide that is removed on maturation. The tract at residues 22–42 (GTEPLESNHEDERRADDTSGD) is disordered. Basic and acidic residues predominate over residues 27 to 38 (ESNHEDERRADD). Positions 44–73 (CVDTNEDCVNWASTGQCEANPSYMRENCRK) constitute a ShKT domain.

In terms of processing, contain 2 disulfide bonds. Expressed by the venom duct.

The protein localises to the secreted. Probable neurotoxin. The polypeptide is Conotoxin Im14.3 (Conus imperialis (Imperial cone)).